The sequence spans 261 residues: Proteasome assembly chaperone 2 (261 aa).

This sequence belongs to the PSMG2 family. Forms a heterodimer with psmg1. Post-translationally, degraded by the proteasome upon completion of 20S proteasome maturation.

The protein localises to the nucleus. Functionally, chaperone protein which promotes assembly of the 20S proteasome as part of a heterodimer with psmg1. The protein is Proteasome assembly chaperone 2 of Xenopus tropicalis (Western clawed frog).